An 89-amino-acid chain; its full sequence is Small ribosomal subunit protein bS20 (89 aa).

Belongs to the bacterial ribosomal protein bS20 family.

Functionally, binds directly to 16S ribosomal RNA. This is Small ribosomal subunit protein bS20 from Syntrophus aciditrophicus (strain SB).